We begin with the raw amino-acid sequence, 142 residues long: Photosystem II extrinsic protein U (142 aa).

Positions 1–29 (MKGLVRLLTVFSLLLGCWGWLGTTQIAQA) are cleaved as a signal peptide.

The protein belongs to the PsbU family. As to quaternary structure, PSII is composed of 1 copy each of membrane proteins PsbA, PsbB, PsbC, PsbD, PsbE, PsbF, PsbH, PsbI, PsbJ, PsbK, PsbL, PsbM, PsbT, PsbX, PsbY, PsbZ, Psb30/Ycf12, peripheral proteins PsbO, CyanoQ (PsbQ), PsbU, PsbV and a large number of cofactors. It forms dimeric complexes.

It is found in the cellular thylakoid membrane. In terms of biological role, one of the extrinsic, lumenal subunits of photosystem II (PSII). PSII is a light-driven water plastoquinone oxidoreductase, using light energy to abstract electrons from H(2)O, generating a proton gradient subsequently used for ATP formation. The extrinsic proteins stabilize the structure of photosystem II oxygen-evolving complex (OEC), the ion environment of oxygen evolution and protect the OEC against heat-induced inactivation. The sequence is that of Photosystem II extrinsic protein U from Nostoc sp. (strain PCC 7120 / SAG 25.82 / UTEX 2576).